Consider the following 166-residue polypeptide: Large ribosomal subunit protein uL10 (166 aa).

It belongs to the universal ribosomal protein uL10 family. In terms of assembly, part of the ribosomal stalk of the 50S ribosomal subunit. The N-terminus interacts with L11 and the large rRNA to form the base of the stalk. The C-terminus forms an elongated spine to which L12 dimers bind in a sequential fashion forming a multimeric L10(L12)X complex.

Forms part of the ribosomal stalk, playing a central role in the interaction of the ribosome with GTP-bound translation factors. This chain is Large ribosomal subunit protein uL10, found in Shewanella amazonensis (strain ATCC BAA-1098 / SB2B).